The sequence spans 429 residues: Light-independent protochlorophyllide reductase subunit N (429 aa).

Positions 32, 57, and 118 each coordinate [4Fe-4S] cluster.

This sequence belongs to the BchN/ChlN family. Protochlorophyllide reductase is composed of three subunits; BchL, BchN and BchB. Forms a heterotetramer of two BchB and two BchN subunits. [4Fe-4S] cluster is required as a cofactor.

It catalyses the reaction chlorophyllide a + oxidized 2[4Fe-4S]-[ferredoxin] + 2 ADP + 2 phosphate = protochlorophyllide a + reduced 2[4Fe-4S]-[ferredoxin] + 2 ATP + 2 H2O. The protein operates within porphyrin-containing compound metabolism; bacteriochlorophyll biosynthesis (light-independent). Functionally, component of the dark-operative protochlorophyllide reductase (DPOR) that uses Mg-ATP and reduced ferredoxin to reduce ring D of protochlorophyllide (Pchlide) to form chlorophyllide a (Chlide). This reaction is light-independent. The NB-protein (BchN-BchB) is the catalytic component of the complex. The polypeptide is Light-independent protochlorophyllide reductase subunit N (Rhodopseudomonas palustris (strain ATCC BAA-98 / CGA009)).